Here is a 328-residue protein sequence, read N- to C-terminus: Cell cycle control protein 50A (328 aa).

The tract at residues 1 to 28 is disordered; it reads MAMNYSAKDEVDGGPTGPPGGAAKTRRP. A2 carries the post-translational modification N-acetylalanine. The segment at 2–48 is required for ATPase and aminophospholipid flippase activity; it reads AMNYSAKDEVDGGPTGPPGGAAKTRRPDNTAFKQQRLPAWQPILTAG. Over 2-49 the chain is Cytoplasmic; sequence AMNYSAKDEVDGGPTGPPGGAAKTRRPDNTAFKQQRLPAWQPILTAGT. Residues 49-315 form an interaction with ATP8A2 region; it reads TVLPTFFIIG…LGVVLLVINH (267 aa). The helical transmembrane segment at 50–70 threads the bilayer; that stretch reads VLPTFFIIGLIFIPIGIGIFV. The Exoplasmic loop portion of the chain corresponds to 71–292; the sequence is TSNNIREIEG…SWMGGKNPFL (222 aa). The interval 102 to 125 is disordered; that stretch reads RDDSQLNGDPSALLNPSKECEPYR. C121 and C135 are joined by a disulfide. N-linked (GlcNAc...) asparagine glycans are attached at residues N144 and N261. The chain crosses the membrane as a helical span at residues 293 to 313; it reads GIAYITIGSISFLLGVVLLVI. Over 314–328 the chain is Cytoplasmic; sequence NHKYRNSSNTADITI.

This sequence belongs to the CDC50/LEM3 family. As to quaternary structure, component of various P4-ATPase flippase complexes which consists of a catalytic alpha subunit and an accessory beta subunit. Interacts with ATP8A1 to form a flippase complex; this complex forms an intermediate phosphoenzyme. Interacts with ATP8A2 to form a flippase complex. TP8B1:TMEM30A and ATP8B2:TMEM30A flippase complexes have been shown to form intermediate phosphoenzymes in vitro. Interacts with alpha subunits ATP8A1, ATP8B1, ATP8B2, ATP8B4, ATP10A, ATP10B, ATP10D, ATP11A, ATP11B and ATP11C. N-glycosylated. Contains high mannose-type oligosaccharides.

It is found in the membrane. The protein localises to the golgi apparatus. It localises to the cytoplasmic vesicle. The protein resides in the secretory vesicle membrane. Its subcellular location is the apical cell membrane. It is found in the photoreceptor inner segment. The protein localises to the cell projection. It localises to the cilium. The protein resides in the photoreceptor outer segment. Accessory component of a P4-ATPase flippase complex which catalyzes the hydrolysis of ATP coupled to the transport of aminophospholipids from the outer to the inner leaflet of various membranes and ensures the maintenance of asymmetric distribution of phospholipids. Phospholipid translocation also seems to be implicated in vesicle formation and in uptake of lipid signaling molecules. The beta subunit may assist in binding of the phospholipid substrate. Required for the proper folding, assembly and ER to Golgi exit of the ATP8A2:TMEM30A flippase complex. ATP8A2:TMEM30A may be involved in regulation of neurite outgrowth, and, reconstituted to liposomes, predomiminantly transports phosphatidylserine (PS) and to a lesser extent phosphatidylethanolamine (PE). The ATP8A1:TMEM30A flippase complex seems to play a role in regulation of cell migration probably involving flippase-mediated translocation of phosphatidylethanolamine (PE) at the plasma membrane. Required for the formation of the ATP8A2, ATP8B1 and ATP8B2 P-type ATPAse intermediate phosphoenzymes. Involved in uptake of platelet-activating factor (PAF). Can also mediate the export of alpha subunits ATP8A1, ATP8B1, ATP8B2, ATP8B4, ATP10A, ATP10B, ATP10D, ATP11A, ATP11B and ATP11C from ER to other membrane localizations. This is Cell cycle control protein 50A from Rattus norvegicus (Rat).